Consider the following 456-residue polypeptide: Signal recognition particle 54 kDa protein (456 aa).

Residues 104-111 (GLYGNGKT), 184-188 (DTSGR), and 242-245 (TKMD) each bind GTP.

Belongs to the GTP-binding SRP family. SRP54 subfamily. In terms of assembly, part of the signal recognition particle protein translocation system, which is composed of SRP and FtsY. Archaeal SRP consists of a 7S RNA molecule of 300 nucleotides and two protein subunits: SRP54 and SRP19.

The protein resides in the cytoplasm. The catalysed reaction is GTP + H2O = GDP + phosphate + H(+). Its function is as follows. Involved in targeting and insertion of nascent membrane proteins into the cytoplasmic membrane. Binds to the hydrophobic signal sequence of the ribosome-nascent chain (RNC) as it emerges from the ribosomes. The SRP-RNC complex is then targeted to the cytoplasmic membrane where it interacts with the SRP receptor FtsY. The sequence is that of Signal recognition particle 54 kDa protein from Thermoplasma acidophilum (strain ATCC 25905 / DSM 1728 / JCM 9062 / NBRC 15155 / AMRC-C165).